A 719-amino-acid polypeptide reads, in one-letter code: Phenylalanine--tRNA ligase beta subunit, chloroplastic (719 aa).

Residues 318–403 form the B5 domain; that stretch reads DHALNINLSI…RIYGYHKFRS (86 aa). Mg(2+) contacts are provided by Asp381, Asp387, Glu390, and Glu391. In terms of domain architecture, FDX-ACB spans 625–718; it reads SKYPSIIRDL…IVKQLNLKIR (94 aa).

Belongs to the phenylalanyl-tRNA synthetase beta subunit family. Type 1 subfamily. Tetramer of two alpha and two beta subunits. Mg(2+) serves as cofactor.

The protein localises to the plastid. It localises to the chloroplast. It catalyses the reaction tRNA(Phe) + L-phenylalanine + ATP = L-phenylalanyl-tRNA(Phe) + AMP + diphosphate + H(+). This chain is Phenylalanine--tRNA ligase beta subunit, chloroplastic, found in Pyropia yezoensis (Susabi-nori).